We begin with the raw amino-acid sequence, 175 residues long: Co-chaperone protein HscB homolog (175 aa).

The 75-residue stretch at 2-76 (NYFALFNLTP…RAEHMLELRG (75 aa)) folds into the J domain.

It belongs to the HscB family. Interacts with HscA and stimulates its ATPase activity.

Functionally, co-chaperone involved in the maturation of iron-sulfur cluster-containing proteins. Seems to help targeting proteins to be folded toward HscA. In Pseudoalteromonas atlantica (strain T6c / ATCC BAA-1087), this protein is Co-chaperone protein HscB homolog.